The sequence spans 739 residues: MICOS complex subunit Mic60 (739 aa).

Residues 23-63 (ANNRQFGGSSSGSGGREQGRRQQEEQGQQGDQGYQGYQSLP) form a disordered region. Low complexity predominate over residues 47 to 61 (EQGQQGDQGYQGYQS). The helical transmembrane segment at 69–89 (AGFGKVVLFVSPLAAVGGVIT) threads the bilayer. Positions 154–219 (VTGLFGGGSG…PAAKPKDNPL (66 aa)) are disordered. Residues 163–198 (GDDKSKKSKVEPVKATPAEEKRPSKPSEVSKTEAKP) are compositionally biased toward basic and acidic residues. Residues 199 to 212 (VSKPAAAAAPAPAA) are compositionally biased toward low complexity. Positions 283–339 (TAVATAERAAREAQEKIVACEIALSAAATAQNAKKVEAVRDKIKKLVDHIGNVKDEL) form a coiled coil.

The protein belongs to the MICOS complex subunit Mic60 family. As to quaternary structure, component of the mitochondrial contact site and cristae organizing system (MICOS) complex. Interacts with the mitochondria-shaping protein Opa1.

The protein resides in the mitochondrion inner membrane. Functionally, component of the MICOS complex, a large protein complex of the mitochondrial inner membrane that plays crucial roles in the maintenance of crista junctions, inner membrane architecture, and formation of contact sites to the outer membrane. The sequence is that of MICOS complex subunit Mic60 from Drosophila melanogaster (Fruit fly).